The chain runs to 148 residues: Arginine repressor (148 aa).

It belongs to the ArgR family.

The protein localises to the cytoplasm. It functions in the pathway amino-acid biosynthesis; L-arginine biosynthesis [regulation]. In terms of biological role, regulates arginine biosynthesis genes. The protein is Arginine repressor of Chlorobium limicola (strain DSM 245 / NBRC 103803 / 6330).